We begin with the raw amino-acid sequence, 426 residues long: Glutamate-1-semialdehyde 2,1-aminomutase (426 aa).

N6-(pyridoxal phosphate)lysine is present on lysine 265.

The protein belongs to the class-III pyridoxal-phosphate-dependent aminotransferase family. HemL subfamily. As to quaternary structure, homodimer. Pyridoxal 5'-phosphate is required as a cofactor.

The protein localises to the cytoplasm. It catalyses the reaction (S)-4-amino-5-oxopentanoate = 5-aminolevulinate. The protein operates within porphyrin-containing compound metabolism; protoporphyrin-IX biosynthesis; 5-aminolevulinate from L-glutamyl-tRNA(Glu): step 2/2. This is Glutamate-1-semialdehyde 2,1-aminomutase from Salmonella newport (strain SL254).